The sequence spans 1378 residues: High molecular weight rhoptry protein 2 (1378 aa).

Residues 1–19 form the signal peptide; that stretch reads MIKVTIFLLLSIFSFNLYG. Intrachain disulfides connect Cys-46–Cys-71 and Cys-233–Cys-240. The helical transmembrane segment at 739–759 threads the bilayer; sequence FVYASYILGLVFFIESHIDIA. Cystine bridges form between Cys-791-Cys-851, Cys-871-Cys-912, and Cys-947-Cys-1034.

Component of the RhopH complex. RhopH complex is composed of CLAG3.1/CLAG3.2, RhopH2 and RhopH3 with a 1:1:1 subunit stoichiometry. Interacts with CLAG3.1/CLAG3.2.

The protein resides in the host cell membrane. It localises to the parasitophorous vacuole membrane. The protein localises to the host cytoplasm. It is found in the cytoplasm. Its subcellular location is the cytoplasmic vesicle. The protein resides in the secretory vesicle. It localises to the rhoptry. Its function is as follows. Participates in the formation of new permeability pathways in Plasmodium-infected erythrocytes enabling the uptake of nutrients from the blood plasma. Required for maintaining invasion capacity of merozoites. Required for parasite growth and proliferation. The chain is High molecular weight rhoptry protein 2 from Plasmodium falciparum (isolate 3D7).